We begin with the raw amino-acid sequence, 628 residues long: MBT domain-containing protein 1 (628 aa).

Residues 1–31 (MFDGYDSCSEDTSSSSSSEESEEEVAPLPSN) form a disordered region. The FCS-type zinc finger occupies 45–80 (PDGKSGMATCEMCGMVGVRDAFYSKTKRFCSVSCSR). Zn(2+) is bound by residues cysteine 54, cysteine 57, cysteine 74, and cysteine 78. N6-acetyllysine is present on lysine 115. 4 MBT repeats span residues 141–245 (FSWG…LVPP), 253–350 (TNWK…IGHR), 351–456 (FKRS…LTPP), and 464–560 (FKWF…LQPP). 2 disordered regions span residues 560–590 (PASQSSRENQSASSKQKKKAKSQQYKGHKKM) and 606–628 (NFLQGASDQESNGSANFYIKQEP). The segment covering 562-573 (SQSSRENQSASS) has biased composition (low complexity). Residues 574-590 (KQKKKAKSQQYKGHKKM) show a composition bias toward basic residues. The segment covering 609-620 (QGASDQESNGSA) has biased composition (polar residues).

Monomer. Component of the NuA4 histone acetyltransferase complex. Interacts with EPC1; interaction is direct and promotes recruitment of MBTD1 into the NuA4 histone acetyltransferase complex.

It is found in the nucleus. It localises to the chromosome. Functionally, chromatin reader component of the NuA4 histone acetyltransferase complex, a multiprotein complex involved in transcriptional activation of select genes principally by acetylation of nucleosomal histones H4 and H2A. The NuA4 complex plays a direct role in repair of DNA double-strand breaks (DSBs) by promoting homologous recombination (HR). MBTD1 specifically recognizes and binds monomethylated and dimethylated 'Lys-20' on histone H4 (H4K20me1 and H4K20me2, respectively). In the NuA4 complex, MBTD1 promotes recruitment of the complex to H4K20me marks by competing with TP53BP1 for binding to H4K20me. Following recruitment to H4K20me at DNA breaks, the NuA4 complex catalyzes acetylation of 'Lys-15' on histone H2A (H2AK15), blocking the ubiquitination mark required for TP53BP1 localization at DNA breaks, thereby promoting homologous recombination (HR). The polypeptide is MBT domain-containing protein 1 (Homo sapiens (Human)).